A 140-amino-acid chain; its full sequence is Putative pre-16S rRNA nuclease (140 aa).

It belongs to the YqgF nuclease family.

The protein localises to the cytoplasm. Its function is as follows. Could be a nuclease involved in processing of the 5'-end of pre-16S rRNA. This is Putative pre-16S rRNA nuclease from Serratia proteamaculans (strain 568).